The primary structure comprises 183 residues: Ribosome-recycling factor (183 aa).

This sequence belongs to the RRF family.

It localises to the cytoplasm. Responsible for the release of ribosomes from messenger RNA at the termination of protein biosynthesis. May increase the efficiency of translation by recycling ribosomes from one round of translation to another. This chain is Ribosome-recycling factor, found in Bifidobacterium longum (strain DJO10A).